Reading from the N-terminus, the 262-residue chain is Glucosamine-6-phosphate deaminase (262 aa).

The active-site Proton acceptor; for enolization step is the aspartate 63. Asparagine 129 serves as the catalytic For ring-opening step. Histidine 131 acts as the Proton acceptor; for ring-opening step in catalysis. Glutamate 136 (for ring-opening step) is an active-site residue.

This sequence belongs to the glucosamine/galactosamine-6-phosphate isomerase family. NagB subfamily.

It carries out the reaction alpha-D-glucosamine 6-phosphate + H2O = beta-D-fructose 6-phosphate + NH4(+). The protein operates within amino-sugar metabolism; N-acetylneuraminate degradation; D-fructose 6-phosphate from N-acetylneuraminate: step 5/5. In terms of biological role, catalyzes the reversible isomerization-deamination of glucosamine 6-phosphate (GlcN6P) to form fructose 6-phosphate (Fru6P) and ammonium ion. The polypeptide is Glucosamine-6-phosphate deaminase (Bacillus cereus (strain ZK / E33L)).